The sequence spans 421 residues: 3-isopropylmalate dehydratase large subunit (421 aa).

[4Fe-4S] cluster contacts are provided by Cys-300, Cys-360, and Cys-363.

This sequence belongs to the aconitase/IPM isomerase family. LeuC type 2 subfamily. As to quaternary structure, heterodimer of LeuC and LeuD. [4Fe-4S] cluster is required as a cofactor.

It catalyses the reaction (2R,3S)-3-isopropylmalate = (2S)-2-isopropylmalate. It functions in the pathway amino-acid biosynthesis; L-leucine biosynthesis; L-leucine from 3-methyl-2-oxobutanoate: step 2/4. Catalyzes the isomerization between 2-isopropylmalate and 3-isopropylmalate, via the formation of 2-isopropylmaleate. This chain is 3-isopropylmalate dehydratase large subunit, found in Moorella thermoacetica (strain ATCC 39073 / JCM 9320).